The following is a 243-amino-acid chain: Carboxy-S-adenosyl-L-methionine synthase (243 aa).

S-adenosyl-L-methionine is bound by residues Tyr40, 65–67 (GCS), 90–91 (DN), 118–119 (DI), Asn133, and Arg200.

The protein belongs to the class I-like SAM-binding methyltransferase superfamily. Cx-SAM synthase family. In terms of assembly, homodimer.

It carries out the reaction prephenate + S-adenosyl-L-methionine = carboxy-S-adenosyl-L-methionine + 3-phenylpyruvate + H2O. Catalyzes the conversion of S-adenosyl-L-methionine (SAM) to carboxy-S-adenosyl-L-methionine (Cx-SAM). The chain is Carboxy-S-adenosyl-L-methionine synthase from Shewanella amazonensis (strain ATCC BAA-1098 / SB2B).